The chain runs to 304 residues: Putative metal ion transporter ZIPCO (304 aa).

The next 8 membrane-spanning stretches (helical) occupy residues 1-21, 46-66, 74-94, 158-178, 183-203, 218-238, 243-263, and 275-295; these read MWLKLILAIVILIECIVVIYL, VASGAILALAFIHMLPEVIGL, IYCCFGLILISVTFLNITDIL, FFIVLSLFIHSFVEGLLIGSL, PIIIVGLSMIAHKWAECLMIY, IYAWSFILSLPLGILVAVLSF, FVEIIFSSIACGFFLYLSFNM, and FYISFSYFFGVCGMSTLMIVF.

It localises to the cell membrane. In terms of biological role, putative transporter for the divalent zinc and iron cations. Required for the development of liver-stage parasites. The protein is Putative metal ion transporter ZIPCO of Plasmodium berghei (strain Anka).